The following is a 596-amino-acid chain: Proline--tRNA ligase (596 aa).

Belongs to the class-II aminoacyl-tRNA synthetase family. ProS type 1 subfamily. As to quaternary structure, homodimer.

The protein resides in the cytoplasm. It catalyses the reaction tRNA(Pro) + L-proline + ATP = L-prolyl-tRNA(Pro) + AMP + diphosphate. Functionally, catalyzes the attachment of proline to tRNA(Pro) in a two-step reaction: proline is first activated by ATP to form Pro-AMP and then transferred to the acceptor end of tRNA(Pro). As ProRS can inadvertently accommodate and process non-cognate amino acids such as alanine and cysteine, to avoid such errors it has two additional distinct editing activities against alanine. One activity is designated as 'pretransfer' editing and involves the tRNA(Pro)-independent hydrolysis of activated Ala-AMP. The other activity is designated 'posttransfer' editing and involves deacylation of mischarged Ala-tRNA(Pro). The misacylated Cys-tRNA(Pro) is not edited by ProRS. The polypeptide is Proline--tRNA ligase (Prochlorococcus marinus (strain NATL1A)).